The chain runs to 418 residues: Vasopressin V1a receptor (418 aa).

The span at 1–15 (MRFSGSPSPGPSNSS) shows a compositional bias: low complexity. Residues 1–20 (MRFSGSPSPGPSNSSRWWPL) form a disordered region. At 1–51 (MRFSGSPSPGPSNSSRWWPLDAGDANTSGDLAGLGEDGGPQADTRNEELAK) the chain is on the extracellular side. N-linked (GlcNAc...) asparagine glycans are attached at residues N13 and N26. Residues 52 to 75 (LEIAVLAVIFVVAVLGNSSVLLAL) traverse the membrane as a helical segment. Over 76–87 (HRTPRKTSRMHL) the chain is Cytoplasmic. The chain crosses the membrane as a helical span at residues 88-109 (FIRHLSLADLAVAFFQVLPQLG). The Extracellular segment spans residues 110–124 (WDITYRFRGPDGLCR). C123 and C202 are disulfide-bonded. Residues 125–146 (VVKHMQVFAMFASAYMLVVMTA) form a helical membrane-spanning segment. The Cytoplasmic portion of the chain corresponds to 147-167 (DRYIAVCHPLKTLQQPARRSR). A helical membrane pass occupies residues 168–189 (LMIAAAWVLSFVLSTPQYFVFS). At 190-217 (MVEVSNVTKTYDCWANFIHPWGLPAYVT) the chain is on the extracellular side. An N-linked (GlcNAc...) asparagine glycan is attached at N195. A helical transmembrane segment spans residues 218-238 (WMTGSVFVAPVVILGTCYGFI). The Cytoplasmic portion of the chain corresponds to 239–293 (CYHIWRKVRGKTAGRQGGPAEGAGESALYRGVLHARCVSSVKTISRAKIRTVKMT). Residues 294–313 (FVIVTAYIVCWAPFFIIQMW) form a helical membrane-spanning segment. Topologically, residues 314–331 (SAWDKNFSWVESENPATA) are extracellular. N319 is a glycosylation site (N-linked (GlcNAc...) asparagine). The chain crosses the membrane as a helical span at residues 332–351 (IPALLASLNSCCNPWIYMFF). At 352 to 418 (SGHLLQDCAQ…KSIKFIPVST (67 aa)) the chain is on the cytoplasmic side. Residues C365 and C366 are each lipidated (S-palmitoyl cysteine). Residues 377–418 (GSDSMSRRQTSFTNNRSPTNSMGTWKDSPKSSKSIKFIPVST) are disordered. A compositionally biased stretch (polar residues) spans 383-399 (RRQTSFTNNRSPTNSMG). Phosphoserine is present on S404.

It belongs to the G-protein coupled receptor 1 family. Vasopressin/oxytocin receptor subfamily.

It localises to the cell membrane. Functionally, receptor for arginine vasopressin. The activity of this receptor is mediated by G proteins which activate a phosphatidyl-inositol-calcium second messenger system. This Ovis aries (Sheep) protein is Vasopressin V1a receptor (AVPR1A).